The sequence spans 446 residues: MPHDPSFTPTQLAARAAYLLRGNDLGTMTTAAPLLYPHMWSWDAAFVAIGLAPLSVERAVVELDTLLSAQWRNGMIPHIVFANGVDGYFPGPARWATATLADNAPRNRLTSGITQPPVHAIAVQRILEHARTRGRSTRAVAEAFLDRRWGDLMRWHRWLAECRDRNERGRITLYHGWESGMDNSPRWDSAYANVVPGKLPEYQRADNVIITDPSQRPSDGEYDRYLWLLEEMKAVRYDDERLPSVMSFQVEDVFFSAIFSVACQVLAEIGEDYKRPHADVKDLYLWAERFRAGVVETTDQRTGAARDFDVLAEKWLVTETAAQFAPLLCGGLPHDRERALLKLLEGPRFCGHPDLKYGLIPSTSPVSRDFRPREYWRGPVWPVLTWLFSWCFARRGWAERARLLRQEGLRQASDGSFAEYYEPFTGEPLGSMQQSWTAAAVLDWLG.

Residues tyrosine 36, 40–43 (WSWD), tyrosine 88, glutamine 115, and glycine 180 each bind substrate. Aspartate 182 serves as the catalytic Proton donor. Residues arginine 216 and 375–376 (YW) contribute to the substrate site. Catalysis depends on glutamate 419, which acts as the Proton acceptor. Position 434 (glutamine 434) interacts with substrate.

The protein belongs to the glycosyl hydrolase 63 family. As to quaternary structure, homotetramer. Dimer of dimers.

The catalysed reaction is (2R)-2-O-(alpha-D-glucopyranosyl)-glycerate + H2O = (R)-glycerate + D-glucose. With respect to regulation, activity is not dependent on divalent cations, but it is enhanced by Mg(2+). In terms of biological role, catalyzes the hydrolysis of glucosylglycerate (GG) to glycerate and glucose. Involved in recovery from nitrogen starvation by promoting the rapid mobilization of the glucosylglycerate that accumulates under these conditions. Can also hydrolyze mannosylglycerate (MG), with tenfold lower efficiency. The chain is Glucosylglycerate hydrolase from Mycolicibacterium hassiacum (strain DSM 44199 / CIP 105218 / JCM 12690 / 3849) (Mycobacterium hassiacum).